The primary structure comprises 336 residues: Glucan endo-1,3-beta-glucosidase A (336 aa).

Positions 1-23 (MAFLSSLLASLLLVGLLIQITGA) are cleaved as a signal peptide. Glutamine 24 carries the pyrrolidone carboxylic acid modification. Residue glutamate 118 is the Proton donor of the active site. The active-site Nucleophile is the glutamate 257.

It belongs to the glycosyl hydrolase 17 family.

It is found in the secreted. The protein resides in the extracellular space. It carries out the reaction Hydrolysis of (1-&gt;3)-beta-D-glucosidic linkages in (1-&gt;3)-beta-D-glucans.. In terms of biological role, implicated in the defense of plants against pathogens. This Solanum lycopersicum (Tomato) protein is Glucan endo-1,3-beta-glucosidase A.